Consider the following 405-residue polypeptide: 1-deoxy-D-xylulose 5-phosphate reductoisomerase (405 aa).

Residues T16, G17, S18, I19, G42, R43, N44, and N130 each coordinate NADPH. K131 provides a ligand contact to 1-deoxy-D-xylulose 5-phosphate. E132 contributes to the NADPH binding site. D156 contributes to the Mn(2+) binding site. 4 residues coordinate 1-deoxy-D-xylulose 5-phosphate: S157, E158, S192, and H215. E158 is a Mn(2+) binding site. G221 contacts NADPH. 4 residues coordinate 1-deoxy-D-xylulose 5-phosphate: S228, N233, K234, and E237. E237 is a Mn(2+) binding site.

It belongs to the DXR family. The cofactor is Mg(2+). Requires Mn(2+) as cofactor.

It carries out the reaction 2-C-methyl-D-erythritol 4-phosphate + NADP(+) = 1-deoxy-D-xylulose 5-phosphate + NADPH + H(+). Its pathway is isoprenoid biosynthesis; isopentenyl diphosphate biosynthesis via DXP pathway; isopentenyl diphosphate from 1-deoxy-D-xylulose 5-phosphate: step 1/6. In terms of biological role, catalyzes the NADPH-dependent rearrangement and reduction of 1-deoxy-D-xylulose-5-phosphate (DXP) to 2-C-methyl-D-erythritol 4-phosphate (MEP). The protein is 1-deoxy-D-xylulose 5-phosphate reductoisomerase of Pasteurella multocida (strain Pm70).